The chain runs to 246 residues: 3'(2'),5'-bisphosphate nucleotidase CysQ (246 aa).

Residues Glu64, Asp83, Leu85, Asp86, and Asp205 each coordinate Mg(2+). Residue Glu64 participates in substrate binding. Residues 85–88 (LDGT) and Asp205 contribute to the substrate site.

The protein belongs to the inositol monophosphatase superfamily. CysQ family. Mg(2+) serves as cofactor.

It localises to the cell inner membrane. It carries out the reaction adenosine 3',5'-bisphosphate + H2O = AMP + phosphate. Its function is as follows. Converts adenosine-3',5'-bisphosphate (PAP) to AMP. This is 3'(2'),5'-bisphosphate nucleotidase CysQ from Escherichia coli O6:H1 (strain CFT073 / ATCC 700928 / UPEC).